The primary structure comprises 490 residues: MKLTKLLTYLMAEPVQNDFHDPDITSIEMDSREVRKGSLFVCIKGYTVDGHDFAQKAAENGAAAIVAEKELDVDVPVIIVRRSQRALSVLSDAFYGQPTKQLQLIGITGTNGKTSTTHMVDEIFKKAGRQTGLIGTMYIKIGDETFPVKNTTPESVTLQKTFKKMNDEHVDTAIMEVSSHALSLGRVHGCDYDIAVFTNLTQDHLDYHKTMEDYRQAKSLLFSQLGGSFNHEKPKRAVLNADDKASAYFEKVTAAHILTYGIENDADVMAKQIEISAQGTSFELVTPKGTKQITVSLVGRFNVYNVLAAAATGIAAGLPFDTITSALEELQGVRGRFELVNHNQPFPVVVDYAHTPDSLENVLNTCKDMTEGKLFVVVGCGGDRDKTKRPKMAEIAVRIADEPIFTSDNPRSEDPLAILRDMERGVEGTYYHSIANREQAIFFAIANAKKGDVVLIAGKGHETYQQIGNETFDFDDAEVAGRAIVELNKK.

Ser31 contributes to the UDP-N-acetyl-alpha-D-muramoyl-L-alanyl-D-glutamate binding site. 109–115 provides a ligand contact to ATP; the sequence is GTNGKTS. Residues Asn150, 151–152, Ser178, and Arg186 each bind UDP-N-acetyl-alpha-D-muramoyl-L-alanyl-D-glutamate; that span reads TT. An N6-carboxylysine modification is found at Lys218. Residues Arg384, 408–411, Gly458, and Glu462 each bind meso-2,6-diaminopimelate; that span reads DNPR. A Meso-diaminopimelate recognition motif motif is present at residues 408–411; that stretch reads DNPR.

The protein belongs to the MurCDEF family. MurE subfamily. Mg(2+) is required as a cofactor. In terms of processing, carboxylation is probably crucial for Mg(2+) binding and, consequently, for the gamma-phosphate positioning of ATP.

The protein resides in the cytoplasm. It catalyses the reaction UDP-N-acetyl-alpha-D-muramoyl-L-alanyl-D-glutamate + meso-2,6-diaminopimelate + ATP = UDP-N-acetyl-alpha-D-muramoyl-L-alanyl-gamma-D-glutamyl-meso-2,6-diaminopimelate + ADP + phosphate + H(+). Its pathway is cell wall biogenesis; peptidoglycan biosynthesis. Functionally, catalyzes the addition of meso-diaminopimelic acid to the nucleotide precursor UDP-N-acetylmuramoyl-L-alanyl-D-glutamate (UMAG) in the biosynthesis of bacterial cell-wall peptidoglycan. This chain is UDP-N-acetylmuramoyl-L-alanyl-D-glutamate--2,6-diaminopimelate ligase, found in Bacillus velezensis (strain DSM 23117 / BGSC 10A6 / LMG 26770 / FZB42) (Bacillus amyloliquefaciens subsp. plantarum).